Consider the following 320-residue polypeptide: Beta-ketoacyl-[acyl-carrier-protein] synthase III (320 aa).

Active-site residues include Cys113 and His247. The interval 248–252 (QANRR) is ACP-binding. Asn277 is a catalytic residue.

This sequence belongs to the thiolase-like superfamily. FabH family. As to quaternary structure, homodimer.

Its subcellular location is the cytoplasm. The enzyme catalyses malonyl-[ACP] + acetyl-CoA + H(+) = 3-oxobutanoyl-[ACP] + CO2 + CoA. It functions in the pathway lipid metabolism; fatty acid biosynthesis. Catalyzes the condensation reaction of fatty acid synthesis by the addition to an acyl acceptor of two carbons from malonyl-ACP. Catalyzes the first condensation reaction which initiates fatty acid synthesis and may therefore play a role in governing the total rate of fatty acid production. Possesses both acetoacetyl-ACP synthase and acetyl transacylase activities. Its substrate specificity determines the biosynthesis of branched-chain and/or straight-chain of fatty acids. This Acidiphilium cryptum (strain JF-5) protein is Beta-ketoacyl-[acyl-carrier-protein] synthase III.